A 79-amino-acid chain; its full sequence is DNA gyrase inhibitor YacG (79 aa).

The Zn(2+) site is built by Cys-7, Cys-10, Cys-26, and Cys-30.

It belongs to the DNA gyrase inhibitor YacG family. In terms of assembly, interacts with GyrB. Requires Zn(2+) as cofactor.

Functionally, inhibits all the catalytic activities of DNA gyrase by preventing its interaction with DNA. Acts by binding directly to the C-terminal domain of GyrB, which probably disrupts DNA binding by the gyrase. The sequence is that of DNA gyrase inhibitor YacG from Shewanella halifaxensis (strain HAW-EB4).